The sequence spans 332 residues: Twinfilin-1 (332 aa).

Positions 5 to 132 (SGIVAEQALL…VDLKNFDSAR (128 aa)) constitute an ADF-H 1 domain. S167 and S172 each carry phosphoserine. The 128-residue stretch at 173 to 300 (PLSLTFRVNS…DKSLLMATNK (128 aa)) folds into the ADF-H 2 domain. Residues 301–332 (EDSLDHGSNPDLPNKSNLKFNKPKGPLRKRRT) are disordered. Over residues 321 to 332 (NKPKGPLRKRRT) the composition is skewed to basic residues.

It belongs to the actin-binding proteins ADF family. Twinfilin subfamily. Interacts with G-actin; ADP-actin form.

The protein localises to the cytoplasm. Its subcellular location is the cytoskeleton. In terms of biological role, actin-binding protein involved in motile and morphological processes. Inhibits actin polymerization, likely by sequestering G-actin. Prevents actin filament assembly by forming a 1:1 complex with actin monomers, and inhibits the nucleotide exchange reaction of actin monomers. In Saccharomyces cerevisiae (strain ATCC 204508 / S288c) (Baker's yeast), this protein is Twinfilin-1 (TWF1).